The sequence spans 202 residues: D-alanyl-D-alanine dipeptidase (202 aa).

The Zn(2+) site is built by His-116 and Asp-123. The active-site Proton donor/acceptor is Glu-181. His-184 lines the Zn(2+) pocket.

It belongs to the peptidase M15D family. Zn(2+) serves as cofactor.

It catalyses the reaction D-alanyl-D-alanine + H2O = 2 D-alanine. Its function is as follows. Catalyzes hydrolysis of the D-alanyl-D-alanine dipeptide. This chain is D-alanyl-D-alanine dipeptidase (vanXB), found in Enterococcus faecalis (strain ATCC 700802 / V583).